The sequence spans 179 residues: Peptide deformylase (179 aa).

Fe cation-binding residues include Cys-102 and His-144. The active site involves Glu-145. His-148 contributes to the Fe cation binding site.

The protein belongs to the polypeptide deformylase family. The cofactor is Fe(2+).

The enzyme catalyses N-terminal N-formyl-L-methionyl-[peptide] + H2O = N-terminal L-methionyl-[peptide] + formate. Removes the formyl group from the N-terminal Met of newly synthesized proteins. Requires at least a dipeptide for an efficient rate of reaction. N-terminal L-methionine is a prerequisite for activity but the enzyme has broad specificity at other positions. The polypeptide is Peptide deformylase (Wolbachia sp. subsp. Drosophila simulans (strain wRi)).